The chain runs to 75 residues: UPF0291 protein lin1342 (75 aa).

Residues 55-75 (IDPKGNDVTPHKIKQMRKNKK) are disordered. Basic residues predominate over residues 65–75 (HKIKQMRKNKK).

This sequence belongs to the UPF0291 family.

The protein resides in the cytoplasm. This is UPF0291 protein lin1342 from Listeria innocua serovar 6a (strain ATCC BAA-680 / CLIP 11262).